The sequence spans 359 residues: Phosphoribosylformylglycinamidine cyclo-ligase (359 aa).

Belongs to the AIR synthase family.

The protein resides in the cytoplasm. It carries out the reaction 2-formamido-N(1)-(5-O-phospho-beta-D-ribosyl)acetamidine + ATP = 5-amino-1-(5-phospho-beta-D-ribosyl)imidazole + ADP + phosphate + H(+). It functions in the pathway purine metabolism; IMP biosynthesis via de novo pathway; 5-amino-1-(5-phospho-D-ribosyl)imidazole from N(2)-formyl-N(1)-(5-phospho-D-ribosyl)glycinamide: step 2/2. This is Phosphoribosylformylglycinamidine cyclo-ligase from Brucella melitensis biotype 2 (strain ATCC 23457).